The following is a 342-amino-acid chain: Cellular tumor antigen p53 (342 aa).

Residues 1–35 (MEEADLTLPLSQDTFHDLWNNVFLSTENESLAPPE) form a transcription activation (acidic) region. The DNA-binding element occupies 68–255 (NYAGEHGFNL…KTEEGNLEKS (188 aa)). Cysteine 142, histidine 145, cysteine 201, and cysteine 205 together coordinate Zn(2+). The interaction with DNA stretch occupies residues 236–243 (RVCACPGR). A compositionally biased stretch (basic and acidic residues) spans 244–256 (DRKTEEGNLEKSG). The disordered stretch occupies residues 244–287 (DRKTEEGNLEKSGTKQTKKRKSAPAPDTSTAKKSKSASSGEDED). The Bipartite nuclear localization signal signature appears at 261-278 (KKRKSAPAPDTSTAKKSK). Positions 271 to 282 (TSTAKKSKSASS) are enriched in low complexity. Positions 288 to 317 (KEIYTLSIRGRNRYLWFKSLNDGLELMDKT) are oligomerization. A Nuclear export signal motif is present at residues 302-313 (LWFKSLNDGLEL). Residues 318-342 (GPKIKQEIPAPSSGKRLLKGGSDSD) are disordered. Positions 319-336 (PKIKQEIPAPSSGKRLLK) are basic (repression of DNA-binding).

The protein belongs to the p53 family. Binds DNA as a homotetramer. Zn(2+) is required as a cofactor.

It localises to the cytoplasm. The protein localises to the nucleus. Its function is as follows. Multifunctional transcription factor that induces cell cycle arrest, DNA repair or apoptosis upon binding to its target DNA sequence. Acts as a tumor suppressor in many tumor types; induces growth arrest or apoptosis depending on the physiological circumstances and cell type. Negatively regulates cell division by controlling expression of a set of genes required for this process. One of the activated genes is an inhibitor of cyclin-dependent kinases. Apoptosis induction seems to be mediated either by stimulation of BAX and FAS antigen expression, or by repression of Bcl-2 expression. This Xiphophorus hellerii (Green swordtail) protein is Cellular tumor antigen p53 (tp53).